The sequence spans 449 residues: Putative F-box/FBD/LRR-repeat protein At5g62970 (449 aa).

Positions 2 to 50 constitute an F-box domain; that stretch reads DKISGFSDDELLVKILSFLPFKFAITTSVLSKQWKFLWMRVPKLEYDED. LRR repeat units lie at residues 27-52, 81-107, 158-185, 186-211, 252-279, and 328-354; these read TTSVLSKQWKFLWMRVPKLEYDEDSM, GHRMRSFIEKNLPLHSSPVIESLRLKF, TLKLRNNILVDVPHVFSLPSLKILHLER, VTYGDGESLQRLLSNCSVLEDLVVEL, YFKLTDLSKTFSGLIENMPKLEEANITA, and IHNAYWSELLYWLLKASPKLQNLEFDE. Residues 368-418 form the FBD domain; sequence FWNQPNSVPQCLLSTLQTFEWSGYPGSVQGKDLATYILRKSRQLKIATISI.

In Arabidopsis thaliana (Mouse-ear cress), this protein is Putative F-box/FBD/LRR-repeat protein At5g62970.